A 592-amino-acid polypeptide reads, in one-letter code: Leucine-rich repeat and immunoglobulin-like domain-containing nogo receptor-interacting protein 3 (592 aa).

The first 24 residues, Met-1–Gly-24, serve as a signal peptide directing secretion. One can recognise an LRRNT domain in the interval Cys-25–Ala-54. Over Cys-25–Thr-531 the chain is Extracellular. 11 LRR repeats span residues Glu-55–Ala-76, Ala-79–Asn-100, Arg-103–Arg-124, Asn-127–Asp-148, Ser-151–Gly-172, Ala-175–His-196, His-207–Glu-228, Asn-247–His-268, His-271–Asp-292, Arg-295–Gly-316, and Gln-319–Ser-340. N-linked (GlcNAc...) asparagine glycosylation is present at Asn-127. Asn-185 is a glycosylation site (N-linked (GlcNAc...) asparagine). Asn-247, Asn-257, and Asn-276 each carry an N-linked (GlcNAc...) asparagine glycan. A glycan (N-linked (GlcNAc...) asparagine) is linked at Asn-324. The region spanning Asn-352 to Lys-406 is the LRRCT domain. Residues Pro-407–Thr-496 form the Ig-like C2-type domain. Cys-429 and Cys-480 form a disulfide bridge. Residues Asn-488 and Asn-512 are each glycosylated (N-linked (GlcNAc...) asparagine). Residues Ala-532–Trp-552 traverse the membrane as a helical segment. Topologically, residues Ser-553 to Ile-592 are cytoplasmic.

Its subcellular location is the membrane. The protein is Leucine-rich repeat and immunoglobulin-like domain-containing nogo receptor-interacting protein 3 (LINGO3) of Homo sapiens (Human).